Here is a 256-residue protein sequence, read N- to C-terminus: Type III pantothenate kinase 1 (256 aa).

6-13 (DIGNSHIF) serves as a coordination point for ATP. Substrate is bound at residue 107 to 110 (GADR). Catalysis depends on Asp-109, which acts as the Proton acceptor. K(+) is bound at residue Asp-130. Thr-133 serves as a coordination point for ATP. Thr-185 contacts substrate.

This sequence belongs to the type III pantothenate kinase family. In terms of assembly, homodimer. Requires NH4(+) as cofactor. The cofactor is K(+).

It is found in the cytoplasm. The catalysed reaction is (R)-pantothenate + ATP = (R)-4'-phosphopantothenate + ADP + H(+). It functions in the pathway cofactor biosynthesis; coenzyme A biosynthesis; CoA from (R)-pantothenate: step 1/5. Functionally, catalyzes the phosphorylation of pantothenate (Pan), the first step in CoA biosynthesis. The chain is Type III pantothenate kinase 1 from Francisella tularensis subsp. holarctica (strain LVS).